Reading from the N-terminus, the 265-residue chain is NAD kinase 1 (265 aa).

The active-site Proton acceptor is Asp-45. Residues 45–46 (DG), His-50, 122–123 (NE), Arg-148, Asp-150, and Ala-185 each bind NAD(+).

Belongs to the NAD kinase family. The cofactor is a divalent metal cation.

It localises to the cytoplasm. The catalysed reaction is NAD(+) + ATP = ADP + NADP(+) + H(+). Involved in the regulation of the intracellular balance of NAD and NADP, and is a key enzyme in the biosynthesis of NADP. Catalyzes specifically the phosphorylation on 2'-hydroxyl of the adenosine moiety of NAD to yield NADP. This Halalkalibacterium halodurans (strain ATCC BAA-125 / DSM 18197 / FERM 7344 / JCM 9153 / C-125) (Bacillus halodurans) protein is NAD kinase 1.